The primary structure comprises 574 residues: Proline--tRNA ligase (574 aa).

Belongs to the class-II aminoacyl-tRNA synthetase family. ProS type 1 subfamily. In terms of assembly, homodimer.

The protein resides in the cytoplasm. It catalyses the reaction tRNA(Pro) + L-proline + ATP = L-prolyl-tRNA(Pro) + AMP + diphosphate. Its function is as follows. Catalyzes the attachment of proline to tRNA(Pro) in a two-step reaction: proline is first activated by ATP to form Pro-AMP and then transferred to the acceptor end of tRNA(Pro). As ProRS can inadvertently accommodate and process non-cognate amino acids such as alanine and cysteine, to avoid such errors it has two additional distinct editing activities against alanine. One activity is designated as 'pretransfer' editing and involves the tRNA(Pro)-independent hydrolysis of activated Ala-AMP. The other activity is designated 'posttransfer' editing and involves deacylation of mischarged Ala-tRNA(Pro). The misacylated Cys-tRNA(Pro) is not edited by ProRS. This is Proline--tRNA ligase from Fervidobacterium nodosum (strain ATCC 35602 / DSM 5306 / Rt17-B1).